The following is a 63-amino-acid chain: Large ribosomal subunit protein uL30 (63 aa).

This sequence belongs to the universal ribosomal protein uL30 family. In terms of assembly, part of the 50S ribosomal subunit.

The sequence is that of Large ribosomal subunit protein uL30 from Chlorobium chlorochromatii (strain CaD3).